A 35-amino-acid chain; its full sequence is METNYLGLLATILVILVPSIFLVILYVQTSSKSES.

The chain crosses the membrane as a helical span at residues 7–27 (GLLATILVILVPSIFLVILYV).

Belongs to the PsbM family. As to quaternary structure, PSII is composed of 1 copy each of membrane proteins PsbA, PsbB, PsbC, PsbD, PsbE, PsbF, PsbH, PsbI, PsbJ, PsbK, PsbL, PsbM, PsbT, PsbX, PsbY, PsbZ, Psb30/Ycf12, peripheral proteins PsbO, CyanoQ (PsbQ), PsbU, PsbV and a large number of cofactors. It forms dimeric complexes.

The protein resides in the cellular thylakoid membrane. Its function is as follows. One of the components of the core complex of photosystem II (PSII). PSII is a light-driven water:plastoquinone oxidoreductase that uses light energy to abstract electrons from H(2)O, generating O(2) and a proton gradient subsequently used for ATP formation. It consists of a core antenna complex that captures photons, and an electron transfer chain that converts photonic excitation into a charge separation. This subunit is found at the monomer-monomer interface. In Synechococcus sp. (strain JA-3-3Ab) (Cyanobacteria bacterium Yellowstone A-Prime), this protein is Photosystem II reaction center protein M.